A 724-amino-acid chain; its full sequence is NAD(+) hydrolase SARM1 (724 aa).

A mitochondrion-targeting transit peptide spans 1 to 27 (MVLTLLLSAYKLCRFFAMSGPRPGAER). One copy of the ARM 1 repeat lies at 60-100 (EVQDALERALPELQQALSALKQAGGARAVGAGLAEVFQLVE). NAD(+) is bound by residues Trp-103, Arg-110, 149-157 (EQILVAENR), and 190-193 (HMFK). 7 ARM repeats span residues 114–153 (QGLC…QILV), 155–193 (ENRD…HMFK), 196–235 (EETC…NCAL), 237–280 (GGQA…LATN), 281–314 (KEVE…CLVD), 315–354 (ASDT…AEAA), and 359–402 (QGKT…EEVP). 2 consecutive SAM domains span residues 412–476 (WKEA…LKTF) and 486–548 (NLAD…MLHS). A phosphoserine mark is found at Ser-548 and Ser-558. The 144-residue stretch at 560–703 (DTPDVFISYR…KIIRFLQGRS (144 aa)) folds into the TIR domain. NAD(+) contacts are provided by residues 569 to 570 (RR) and Glu-599. Glu-642 is an active-site residue. The tract at residues 704-724 (SRDSSAGSDTSLEGAAPMGPT) is disordered.

This sequence belongs to the SARM1 family. As to quaternary structure, homooctamer; forms an octameric ring via SAM domains. Interacts with TICAM1/TRIF and thereby interferes with TICAM1/TRIF function. Interacts with MAPK10/JNK3 and SDC2 (via cytoplasmic domain). Post-translationally, phosphorylation at Ser-548 by JNK kinases (MAPK8, MAPK9 and /or MAPK10) enhance the NAD(+) hydrolase (NADase) activity. Phosphorylation at Ser-548 and subsequent activation takes place in response to oxidative stress conditions and inhibits mitochondrial respiration. In terms of tissue distribution, predominantly expressed in brain, kidney and liver. Expressed at lower level in placenta.

The protein localises to the cytoplasm. It is found in the cell projection. The protein resides in the axon. Its subcellular location is the dendrite. It localises to the synapse. The protein localises to the mitochondrion. It carries out the reaction NAD(+) + H2O = ADP-D-ribose + nicotinamide + H(+). It catalyses the reaction NAD(+) = cyclic ADP-beta-D-ribose + nicotinamide + H(+). The catalysed reaction is NADP(+) + H2O = ADP-D-ribose 2'-phosphate + nicotinamide + H(+). With respect to regulation, autoinhibited: in the inactive state, the enzymatic TIR domain is held apart by the autoinhibiting ARM repeats. NAD(+)-binding to ARM repeats maintains an inactive state by promoting interaction between ARM repeats and the TIR domain, thereby facilitating inhibition of the enzymatic TIR domain. Following activation, possibly by nicotinamide mononucleotide (NMN), auto-inhibitory interactions are released, allowing self-association of the TIR domains and subsequent activation of the NAD(+) hydrolase (NADase) activity. Self-association of TIR domains is facilitated by the octamer of SAM domains. NAD(+) hydrolase activity is inhibited by nicotinamide. Specifically inhibited by berberine chloride and zinc chloride. Functionally, NAD(+) hydrolase, which plays a key role in axonal degeneration following injury by regulating NAD(+) metabolism. Acts as a negative regulator of MYD88- and TRIF-dependent toll-like receptor signaling pathway by promoting Wallerian degeneration, an injury-induced form of programmed subcellular death which involves degeneration of an axon distal to the injury site. Wallerian degeneration is triggered by NAD(+) depletion: in response to injury, SARM1 is activated and catalyzes cleavage of NAD(+) into ADP-D-ribose (ADPR), cyclic ADPR (cADPR) and nicotinamide; NAD(+) cleavage promoting cytoskeletal degradation and axon destruction. Also able to hydrolyze NADP(+), but not other NAD(+)-related molecules. Can activate neuronal cell death in response to stress. Regulates dendritic arborization through the MAPK4-JNK pathway. Involved in innate immune response: inhibits both TICAM1/TRIF- and MYD88-dependent activation of JUN/AP-1, TRIF-dependent activation of NF-kappa-B and IRF3, and the phosphorylation of MAPK14/p38. This Homo sapiens (Human) protein is NAD(+) hydrolase SARM1.